The primary structure comprises 586 residues: Kinesin-like protein KIF25 (586 aa).

Residues Ser10 to Gln94 adopt a coiled-coil conformation. One can recognise a Kinesin motor domain in the interval Asn173–Val565. Gly267–Ser274 contributes to the ATP binding site. Disordered stretches follow at residues Thr417–Ala460 and Gln564–Asp586.

This sequence belongs to the TRAFAC class myosin-kinesin ATPase superfamily. Kinesin family. As to quaternary structure, homotetramer.

Its subcellular location is the cytoplasm. It is found in the cytoskeleton. The protein localises to the microtubule organizing center. It localises to the centrosome. Functionally, minus-end microtubule-dependent motor protein. Acts as a negative regulator of centrosome separation required to prevent premature centrosome separation during interphase. Required to maintain a centered nucleus to ensure that the spindle is stably oriented at the onset of mitosis. May also act as a negative regulator of amino acid starvation-induced autophagy. In Macaca fascicularis (Crab-eating macaque), this protein is Kinesin-like protein KIF25.